A 360-amino-acid chain; its full sequence is Phospho-N-acetylmuramoyl-pentapeptide-transferase (360 aa).

The next 10 helical transmembrane spans lie at 25 to 45 (RGIL…PWLI), 74 to 94 (MGGA…ADLA), 97 to 117 (YVWV…VDDY), 132 to 152 (WKYF…YMTA), 168 to 188 (IEIP…VGSS), 199 to 219 (GLAI…CYLS), 236 to 256 (SGEL…FLWF), 263 to 283 (VFMG…IAVI), 288 to 308 (VVLF…MIQV), and 338 to 358 (VIVR…ATLK).

It belongs to the glycosyltransferase 4 family. MraY subfamily. Mg(2+) serves as cofactor.

The protein resides in the cell inner membrane. The enzyme catalyses UDP-N-acetyl-alpha-D-muramoyl-L-alanyl-gamma-D-glutamyl-meso-2,6-diaminopimeloyl-D-alanyl-D-alanine + di-trans,octa-cis-undecaprenyl phosphate = di-trans,octa-cis-undecaprenyl diphospho-N-acetyl-alpha-D-muramoyl-L-alanyl-D-glutamyl-meso-2,6-diaminopimeloyl-D-alanyl-D-alanine + UMP. It functions in the pathway cell wall biogenesis; peptidoglycan biosynthesis. Functionally, catalyzes the initial step of the lipid cycle reactions in the biosynthesis of the cell wall peptidoglycan: transfers peptidoglycan precursor phospho-MurNAc-pentapeptide from UDP-MurNAc-pentapeptide onto the lipid carrier undecaprenyl phosphate, yielding undecaprenyl-pyrophosphoryl-MurNAc-pentapeptide, known as lipid I. This Stutzerimonas stutzeri (strain A1501) (Pseudomonas stutzeri) protein is Phospho-N-acetylmuramoyl-pentapeptide-transferase.